Consider the following 197-residue polypeptide: Large ribosomal subunit protein bL25 (197 aa).

The protein belongs to the bacterial ribosomal protein bL25 family. CTC subfamily. As to quaternary structure, part of the 50S ribosomal subunit; part of the 5S rRNA/L5/L18/L25 subcomplex. Contacts the 5S rRNA. Binds to the 5S rRNA independently of L5 and L18.

Its function is as follows. This is one of the proteins that binds to the 5S RNA in the ribosome where it forms part of the central protuberance. The sequence is that of Large ribosomal subunit protein bL25 from Carboxydothermus hydrogenoformans (strain ATCC BAA-161 / DSM 6008 / Z-2901).